A 142-amino-acid polypeptide reads, in one-letter code: E1B protein, small T-antigen (142 aa).

This sequence belongs to the adenoviridae E1B 19 kDa protein family.

The protein resides in the host cell membrane. The protein localises to the host nucleus envelope. It localises to the host nucleus lamina. Its function is as follows. Putative adenovirus Bcl-2 homolog that inhibits apoptosis induced by TNF or FAS pathways, as well as p53-mediated apoptosis. Without E1B 19K function, virus production is compromised because of premature death of host cell. Interacts with Bax protein in cell lysates. This is E1B protein, small T-antigen from Homo sapiens (Human).